Reading from the N-terminus, the 588-residue chain is MSKRTTYCGLVTEAFLGQEITLKGWVNNRRDLGGLIFVDLRDREGIVQVVFNPAFSEEALKIAETVRSEYVVEVQGTVTKRDPETVNPKIKTGQVEVQVTNIKVINKSETPPFSINEENVNVDENIRLKYRYLDLRRQELAQTFKMRHQITRSIRQYLDDEGFFDIETPVLTKSTPEGARDYLVPSRVHDGEFYALPQSPQLFKQLLMISGFDKYYQIVKCFRDEDLRADRQPEFTQVDIEMSFVDQEDVMQMGEEMLKKVVKEVKGVEINGAFPRMTYKEAMRRYGSDKPDTRFEMELIDVSQLGRDMDFKVFKDTVENDGEIKAIVAKGAAEQYTRKDMDALTEFVNIYGAKGLAWVKVVEDGLTGPIGRFFEAENVETLLTLTGAEAGDLVMFVADKPNVVAQSLGALRVKLAKELGLIDETKLNFLWVTDWPLLEYDEDAKRYVAAHHPFTSPKEADIAKLGTAPEEAEANAYDIVLNGYELGGGSIRIHDGELQEKMFEVLGFTKEQAQEQFGFLLDAFKYGAPPHGGIALGLDRLVMLLTNRTNLRDTIAFPKTASATCLLTNAPGEVSDKQLEELSLRIRH.

L-aspartate is bound at residue E177. Positions 201–204 (QLFK) are aspartate. R223 contributes to the L-aspartate binding site. Residues 223 to 225 (RDE) and Q232 each bind ATP. H451 contacts L-aspartate. E485 contacts ATP. R492 contacts L-aspartate. 537–540 (GLDR) is a binding site for ATP.

The protein belongs to the class-II aminoacyl-tRNA synthetase family. Type 1 subfamily. In terms of assembly, homodimer.

The protein resides in the cytoplasm. The enzyme catalyses tRNA(Asp) + L-aspartate + ATP = L-aspartyl-tRNA(Asp) + AMP + diphosphate. Catalyzes the attachment of L-aspartate to tRNA(Asp) in a two-step reaction: L-aspartate is first activated by ATP to form Asp-AMP and then transferred to the acceptor end of tRNA(Asp). This chain is Aspartate--tRNA ligase, found in Staphylococcus aureus (strain MRSA252).